Here is a 402-residue protein sequence, read N- to C-terminus: Succinyl-diaminopimelate desuccinylase (402 aa).

His88 contributes to the Zn(2+) binding site. Asp90 is a catalytic residue. Zn(2+) is bound at residue Asp121. The active-site Proton acceptor is Glu155. 3 residues coordinate Zn(2+): Glu156, Glu184, and His374.

This sequence belongs to the peptidase M20A family. DapE subfamily. As to quaternary structure, homodimer. Zn(2+) serves as cofactor. Requires Co(2+) as cofactor.

It catalyses the reaction N-succinyl-(2S,6S)-2,6-diaminopimelate + H2O = (2S,6S)-2,6-diaminopimelate + succinate. It functions in the pathway amino-acid biosynthesis; L-lysine biosynthesis via DAP pathway; LL-2,6-diaminopimelate from (S)-tetrahydrodipicolinate (succinylase route): step 3/3. Functionally, catalyzes the hydrolysis of N-succinyl-L,L-diaminopimelic acid (SDAP), forming succinate and LL-2,6-diaminopimelate (DAP), an intermediate involved in the bacterial biosynthesis of lysine and meso-diaminopimelic acid, an essential component of bacterial cell walls. This is Succinyl-diaminopimelate desuccinylase from Psychrobacter sp. (strain PRwf-1).